Consider the following 1006-residue polypeptide: DNA ligase 4 (1006 aa).

A disordered region spans residues 1 to 36 (MDSDDDYNGPADTNPRLEDEESDLDEKYPNRPRNHS). Residues Glu-318, Lys-320, Leu-321, Arg-325, Glu-387, Phe-427, Glu-487, Lys-492, Lys-509, and Lys-511 each coordinate ATP. Lys-320 serves as the catalytic N6-AMP-lysine intermediate. Glu-387 provides a ligand contact to Mg(2+). Glu-487 is a binding site for Mg(2+). BRCT domains are found at residues 718-811 (PSGN…PDSL) and 890-1002 (PSGW…GFQP).

This sequence belongs to the ATP-dependent DNA ligase family. Requires Mg(2+) as cofactor.

Its subcellular location is the nucleus. It catalyses the reaction ATP + (deoxyribonucleotide)n-3'-hydroxyl + 5'-phospho-(deoxyribonucleotide)m = (deoxyribonucleotide)n+m + AMP + diphosphate.. DNA ligase involved in DNA non-homologous end joining (NHEJ); required for double-strand break (DSB) repair. The protein is DNA ligase 4 (lig4) of Aspergillus oryzae (strain ATCC 42149 / RIB 40) (Yellow koji mold).